A 195-amino-acid polypeptide reads, in one-letter code: 3-isopropylmalate dehydratase small subunit (195 aa).

This sequence belongs to the LeuD family. LeuD type 1 subfamily. In terms of assembly, heterodimer of LeuC and LeuD.

It catalyses the reaction (2R,3S)-3-isopropylmalate = (2S)-2-isopropylmalate. Its pathway is amino-acid biosynthesis; L-leucine biosynthesis; L-leucine from 3-methyl-2-oxobutanoate: step 2/4. In terms of biological role, catalyzes the isomerization between 2-isopropylmalate and 3-isopropylmalate, via the formation of 2-isopropylmaleate. In Rubrobacter xylanophilus (strain DSM 9941 / JCM 11954 / NBRC 16129 / PRD-1), this protein is 3-isopropylmalate dehydratase small subunit.